We begin with the raw amino-acid sequence, 1240 residues long: Selection and upkeep of intraepithelial T-cells protein 6 (1240 aa).

An N-terminal signal peptide occupies residues 1-24; the sequence is MGTIGVPLTAHCVVLFLLQMVALS. Topologically, residues 25–1086 are extracellular; it reads TEQFTVNGLE…CNKRNPFWKK (1062 aa). The Ig-like V-type domain occupies 26-141; it reads EQFTVNGLES…EEHIIEVKVT (116 aa). Cysteines 49 and 123 form a disulfide. The Ig-like C1-type domain occupies 142 to 231; the sequence is ATSSDIQILM…FVTHQEESIS (90 aa). Residues N155, N200, and N314 are each glycosylated (N-linked (GlcNAc...) asparagine). An intrachain disulfide couples C163 to C217. The chain crosses the membrane as a helical span at residues 1087–1107; that stretch reads HALDLGISVFAIIVVTLIRHL. Residues 1108–1125 are Cytoplasmic-facing; it reads NQREADQHFELDTLWSKD. A helical transmembrane segment spans residues 1126–1146; that stretch reads TSVILCVLIMFNNRLKALIYF. Residues 1147–1167 are Extracellular-facing; sequence RLYGYSPPGKTYKYIVNYILR. Residues 1168 to 1188 form a helical membrane-spanning segment; it reads FSQPLFFIVYSAIILVMHLQI. Residues 1189 to 1205 lie on the Cytoplasmic side of the membrane; it reads QNTDSLFSLYNSWMVEM. Residues 1206–1226 traverse the membrane as a helical segment; it reads IMVLGLLLAIFNVKNIATALL. Residues 1227–1240 lie on the Extracellular side of the membrane; the sequence is HLGRTTLRLFRIKD.

The protein belongs to the SKINT family. Expressed in skin.

The protein localises to the membrane. In terms of biological role, may act by engaging a cell surface molecule on immature T-cells in the embryonic thymus. This chain is Selection and upkeep of intraepithelial T-cells protein 6 (Skint6), found in Mus musculus (Mouse).